Here is a 389-residue protein sequence, read N- to C-terminus: Tubby-like F-box protein 11 (389 aa).

An F-box domain is found at 36–82 (DYRWSEIPEELLREILIRVEAADGGGWPSRRSVVACAGVCRGWRLLM). A disordered region spans residues 250–289 (STMEPQGVASEPSEFPLLGTRSTLSRSQSKPLRSSSSHLK). The span at 273–286 (LSRSQSKPLRSSSS) shows a compositional bias: low complexity.

It belongs to the TUB family. Ubiquitous.

The chain is Tubby-like F-box protein 11 from Arabidopsis thaliana (Mouse-ear cress).